Consider the following 255-residue polypeptide: Octanoyltransferase (255 aa).

Residues 1-27 form a disordered region; it reads MPPASDAHAAPDAAASTSASPQSCAAP. The region spanning 59–240 is the BPL/LPL catalytic domain; it reads PDTGDEIWVV…RLIANLDGAT (182 aa). Residues 99–106, 171–173, and 184–186 contribute to the substrate site; these read RGGQITYH, ALG, and GLS. Cys-202 acts as the Acyl-thioester intermediate in catalysis.

It belongs to the LipB family.

Its subcellular location is the cytoplasm. It catalyses the reaction octanoyl-[ACP] + L-lysyl-[protein] = N(6)-octanoyl-L-lysyl-[protein] + holo-[ACP] + H(+). It functions in the pathway protein modification; protein lipoylation via endogenous pathway; protein N(6)-(lipoyl)lysine from octanoyl-[acyl-carrier-protein]: step 1/2. Functionally, catalyzes the transfer of endogenously produced octanoic acid from octanoyl-acyl-carrier-protein onto the lipoyl domains of lipoate-dependent enzymes. Lipoyl-ACP can also act as a substrate although octanoyl-ACP is likely to be the physiological substrate. The sequence is that of Octanoyltransferase from Burkholderia thailandensis (strain ATCC 700388 / DSM 13276 / CCUG 48851 / CIP 106301 / E264).